A 405-amino-acid polypeptide reads, in one-letter code: Aspartokinase (405 aa).

Position 7–10 (7–10 (KYGG)) interacts with ATP. 25–30 (RIAHYR) is a binding site for substrate. Residue S41 participates in ATP binding. Residues 47-49 (TDE), E74, 125-126 (LE), 150-153 (RGGS), and S153 each bind substrate. Residues 173-174 (TD), 179-184 (YTTDPH), and R209 contribute to the ATP site. ACT domains follow at residues 263-342 (IGLI…IAKV) and 344-405 (IVGV…LDKA). Substrate is bound by residues D270, 288–290 (AVD), Q294, 355–356 (VP), 369–370 (NI), and 376–377 (SE).

The protein belongs to the aspartokinase family. Tetramer consisting of 2 isoforms Alpha (catalytic and regulation) and of a homodimer of 2 isoforms Beta (regulation).

The enzyme catalyses L-aspartate + ATP = 4-phospho-L-aspartate + ADP. The protein operates within amino-acid biosynthesis; L-lysine biosynthesis via DAP pathway; (S)-tetrahydrodipicolinate from L-aspartate: step 1/4. It functions in the pathway amino-acid biosynthesis; L-methionine biosynthesis via de novo pathway; L-homoserine from L-aspartate: step 1/3. Its pathway is amino-acid biosynthesis; L-threonine biosynthesis; L-threonine from L-aspartate: step 1/5. Functionally, catalyzes the phosphorylation of the beta-carboxyl group of aspartic acid with ATP to yield 4-phospho-L-aspartate, which is involved in the branched biosynthetic pathway leading to the biosynthesis of amino acids lysine, threonine, isoleucine and methionine. This chain is Aspartokinase (ask), found in Thermus thermophilus (strain ATCC BAA-163 / DSM 7039 / HB27).